Here is a 352-residue protein sequence, read N- to C-terminus: MGHCTSKDQKEGKRLNRRIDEQIKKDQSMSLRIIKLLLLGAGESGKSTILKQMRILHKDGFSQQDLEMIRPVVYSNCIHSMLSILRAMFHLQIEYGEPDRVRDSQLVFATVHANKEELTEELAAAMQRLWHDPGVRECYRRSNEYQIDDSAKYFLDNLPRLSSPNYVPSEQDLLRTRIKTTGITEVLFELKGLTFRVIDVGGQRSERKKWIHCFDNVNAIIFISSLSEYDQTLREDNCTNRMQESLKLFDSICNSPWFADIHFILFLNKKDLFAEKIVRSPLTVCFPEYKGQQNQTECINYIQWKFEQLNRSSQREIYCHHTCATDTNNVQFVLDACLDMIIAKNLKSMGLC.

Gly-2 carries N-myristoyl glycine lipidation. The S-palmitoyl cysteine moiety is linked to residue Cys-4. The region spanning 32–352 (RIIKLLLLGA…AKNLKSMGLC (321 aa)) is the G-alpha domain. The tract at residues 35-48 (KLLLLGAGESGKST) is G1 motif. GTP contacts are provided by residues 40-47 (GAGESGKS), 174-180 (LRTRIKT), 199-203 (DVGGQ), 268-271 (NKKD), and Ala-324. Residues Ser-47 and Thr-180 each coordinate Mg(2+). The segment at 172–180 (DLLRTRIKT) is G2 motif. The segment at 195-204 (FRVIDVGGQR) is G3 motif. The G4 motif stretch occupies residues 264–271 (ILFLNKKD). Residues 322–327 (TCATDT) are G5 motif.

It belongs to the G-alpha family. G(i/o/t/z) subfamily. As to quaternary structure, g proteins are composed of 3 units; alpha, beta and gamma. The alpha chain contains the guanine nucleotide binding site.

Guanine nucleotide-binding proteins (G proteins) are involved as modulators or transducers in various transmembrane signaling systems. In Caenorhabditis elegans, this protein is Guanine nucleotide-binding protein alpha-7 subunit (gpa-7).